The sequence spans 514 residues: M-phase inducer phosphatase 1 (514 aa).

Positions methionine 73 to phenylalanine 83 match the Phosphodegron motif. Serine 75 is modified (phosphoserine; by CHEK1). Phosphoserine; by NEK11 is present on residues serine 78, serine 81, and serine 87. Serine 106 bears the Phosphoserine mark. The residue at position 123 (serine 123) is a Phosphoserine; by CHEK1 and CHEK2. The KEN box motif lies at lysine 140–asparagine 142. Phosphoserine; by CHEK1 is present on serine 172. The segment at proline 256 to leucine 308 is disordered. A compositionally biased stretch (basic and acidic residues) spans lysine 266 to arginine 277. Serine 271 and serine 284 each carry phosphoserine; by CHEK1 and CHEK2. A Phosphoserine modification is found at serine 311. A Rhodanese domain is found at leucine 366–glutamate 472. The active site involves cysteine 421. At threonine 497 the chain carries Phosphothreonine; by CHEK1. Phosphoserine; by PLK3 occurs at positions 503 and 509.

It belongs to the MPI phosphatase family. In terms of assembly, interacts with CCNB1/cyclin B1. Interacts with YWHAE/14-3-3 epsilon when phosphorylated. Interacts with CUL1 specifically when CUL1 is neddylated and active. Interacts with BTRC/BTRCP1 and FBXW11/BTRCP2. Interactions with CUL1, BTRC and FBXW11 are enhanced upon DNA damage. Interacts with CHEK2; mediates CDC25A phosphorylation and degradation in response to infrared-induced DNA damages. Interacts with HSP90AB1; prevents heat shock-mediated CDC25A degradation and contributes to cell cycle progression. In terms of processing, phosphorylated by CHEK1 on Ser-75, Ser-123, Ser-172, Ser-271, Ser-284 and Thr-497 during checkpoint mediated cell cycle arrest. Also phosphorylated by CHEK2 on Ser-123, Ser-271, and Ser-284 during checkpoint mediated cell cycle arrest. Phosphorylation on Ser-172 and Thr-497 creates binding sites for YWHAE/14-3-3 epsilon which inhibits CDC25A. Phosphorylation on Ser-75, Ser-123, Ser-172, Ser-271 and Ser-284 may also promote ubiquitin-dependent proteolysis of CDC25A by the SCF complex. Phosphorylation of CDC25A at Ser-75 by CHEK1 primes it for subsequent phosphorylation at Ser-75, Ser-81 and Ser-87 by NEK11. Phosphorylation by NEK11 is required for BTRC-mediated polyubiquitination and degradation. Phosphorylation by PIM1 leads to an increase in phosphatase activity. Phosphorylated by PLK3 following DNA damage, leading to promote its ubiquitination and degradation. Ubiquitinated by the anaphase promoting complex/cyclosome (APC/C) ubiquitin ligase complex that contains FZR1/CDH1 during G1 phase leading to its degradation by the proteasome. Ubiquitinated by a SCF complex containing BTRC and FBXW11 during S phase leading to its degradation by the proteasome. Deubiquitination by USP17L2/DUB3 leads to its stabilization. Ubiquitously expressed in most developing tissue. High levels in the testis and lower levels in the ovary, particularly in germ cells. Lower levels also in kidney, liver, heart and muscle.

The catalysed reaction is O-phospho-L-tyrosyl-[protein] + H2O = L-tyrosyl-[protein] + phosphate. Stimulated by B-type cyclins. Stimulated by PIM1-mediated phosphorylation. In terms of biological role, tyrosine protein phosphatase which functions as a dosage-dependent inducer of mitotic progression. Directly dephosphorylates CDK1 and stimulates its kinase activity. Also dephosphorylates CDK2 in complex with cyclin-E, in vitro. The chain is M-phase inducer phosphatase 1 (Cdc25a) from Mus musculus (Mouse).